A 193-amino-acid polypeptide reads, in one-letter code: Probable thymidylate kinase (193 aa).

7-14 (GIDGSGKT) contributes to the ATP binding site.

This sequence belongs to the thymidylate kinase family.

It carries out the reaction dTMP + ATP = dTDP + ADP. This Pyrobaculum calidifontis (strain DSM 21063 / JCM 11548 / VA1) protein is Probable thymidylate kinase.